The sequence spans 363 residues: 3-isopropylmalate dehydrogenase (363 aa).

Residue 78-91 (GKKWDTLPINERPE) participates in NAD(+) binding. Residues arginine 99, arginine 109, arginine 138, and aspartate 227 each coordinate substrate. Mg(2+)-binding residues include aspartate 227, aspartate 251, and aspartate 255. 285-297 (GSAPDIQGKNIAN) contributes to the NAD(+) binding site.

It belongs to the isocitrate and isopropylmalate dehydrogenases family. LeuB type 1 subfamily. As to quaternary structure, homodimer. Mg(2+) serves as cofactor. It depends on Mn(2+) as a cofactor.

The protein resides in the cytoplasm. It catalyses the reaction (2R,3S)-3-isopropylmalate + NAD(+) = 4-methyl-2-oxopentanoate + CO2 + NADH. It participates in amino-acid biosynthesis; L-leucine biosynthesis; L-leucine from 3-methyl-2-oxobutanoate: step 3/4. Catalyzes the oxidation of 3-carboxy-2-hydroxy-4-methylpentanoate (3-isopropylmalate) to 3-carboxy-4-methyl-2-oxopentanoate. The product decarboxylates to 4-methyl-2 oxopentanoate. In Buchnera aphidicola subsp. Diuraphis noxia, this protein is 3-isopropylmalate dehydrogenase.